Reading from the N-terminus, the 440-residue chain is Gamma-aminobutyric acid receptor subunit pi (440 aa).

A signal peptide spans 1–23 (MKRSLHLTFVCLSLFSARMCVQG). The Extracellular portion of the chain corresponds to 24-241 (NQFNIEVSRS…LVLQFELQRN (218 aa)). Residues N43, N102, and N145 are each glycosylated (N-linked (GlcNAc...) asparagine). An intrachain disulfide couples C160 to C174. Residues N196 and N228 are each glycosylated (N-linked (GlcNAc...) asparagine). A helical membrane pass occupies residues 242 to 262 (VLYFILETYVPSTFLVVLSWV). Residues 263 to 270 (SFWISLDS) lie on the Cytoplasmic side of the membrane. The helical transmembrane segment at 271–290 (VPARTCIGVTTVLSMTTLMI) threads the bilayer. The Extracellular portion of the chain corresponds to 291–301 (GSRTSLPNTNC). The chain crosses the membrane as a helical span at residues 302–322 (FIKAIDVYLGICFSFVFGALL). The Cytoplasmic segment spans residues 323-419 (EYAVAHYSSL…NPSNVDRYSK (97 aa)). Residues 420-440 (LLFPLIFMLANVFYWAYYMYF) traverse the membrane as a helical segment.

This sequence belongs to the ligand-gated ion channel (TC 1.A.9) family. Gamma-aminobutyric acid receptor (TC 1.A.9.5) subfamily. GABRP sub-subfamily. As to quaternary structure, heteropentamer, formed by a combination of alpha (GABRA1-6), beta (GABRB1-3), gamma (GABRG1-3), delta (GABRD), epsilon (GABRE), rho (GABRR1-3), pi (GABRP) and theta (GABRQ) chains, each subunit exhibiting distinct physiological and pharmacological properties.

Its subcellular location is the cell membrane. It is found in the apical cell membrane. The enzyme catalyses chloride(in) = chloride(out). Pi subunit of the heteropentameric ligand-gated chloride channel gated by gamma-aminobutyric acid (GABA). GABA-gated chloride channels, also named GABA(A) receptors (GABAAR), consist of five subunits arranged around a central pore and contain GABA active binding site(s) located at the alpha and beta subunit interfaces. When activated by GABA, GABAARs selectively allow the flow of chloride anions across the cell membrane down their electrochemical gradient. Pi-containing GABAARs are mostly located in peripheral tissues. In the uterus, pi subunits modulate uterus contraction by altering the sensitivity of GABAARs to pregnanolone. In the lungs, pi-containing GABAARs contribute to pulmonary fluid transport via luminal secretion of chloride. This chain is Gamma-aminobutyric acid receptor subunit pi (GABRP), found in Bos taurus (Bovine).